The primary structure comprises 152 residues: SsrA-binding protein (152 aa).

It belongs to the SmpB family.

It localises to the cytoplasm. In terms of biological role, required for rescue of stalled ribosomes mediated by trans-translation. Binds to transfer-messenger RNA (tmRNA), required for stable association of tmRNA with ribosomes. tmRNA and SmpB together mimic tRNA shape, replacing the anticodon stem-loop with SmpB. tmRNA is encoded by the ssrA gene; the 2 termini fold to resemble tRNA(Ala) and it encodes a 'tag peptide', a short internal open reading frame. During trans-translation Ala-aminoacylated tmRNA acts like a tRNA, entering the A-site of stalled ribosomes, displacing the stalled mRNA. The ribosome then switches to translate the ORF on the tmRNA; the nascent peptide is terminated with the 'tag peptide' encoded by the tmRNA and targeted for degradation. The ribosome is freed to recommence translation, which seems to be the essential function of trans-translation. The protein is SsrA-binding protein of Gloeobacter violaceus (strain ATCC 29082 / PCC 7421).